The chain runs to 400 residues: Cytochrome b (400 aa).

Helical transmembrane passes span 32–52 (FGSL…TLAM), 76–98 (WLIR…LHIG), 113–133 (TWSI…LGYV), and 179–199 (FFSL…MHLI). Residues His-82 and His-96 each coordinate heme b. Heme b is bound by residues His-183 and His-197. Position 202 (His-202) interacts with a ubiquinone. 4 consecutive transmembrane segments (helical) span residues 226–246 (YLFK…IFVF), 290–310 (AVGV…PYLD), 322–342 (LSKV…QLGA), and 349–369 (FIVF…IIIP).

It belongs to the cytochrome b family. Fungal cytochrome b-c1 complex contains 10 subunits; 3 respiratory subunits, 2 core proteins and 5 low-molecular weight proteins. Cytochrome b-c1 complex is a homodimer. The cofactor is heme b.

The protein resides in the mitochondrion inner membrane. Component of the ubiquinol-cytochrome c reductase complex (complex III or cytochrome b-c1 complex) that is part of the mitochondrial respiratory chain. The b-c1 complex mediates electron transfer from ubiquinol to cytochrome c. Contributes to the generation of a proton gradient across the mitochondrial membrane that is then used for ATP synthesis. In Epidermophyton floccosum, this protein is Cytochrome b (cob).